Here is an 858-residue protein sequence, read N- to C-terminus: Alanine--tRNA ligase (858 aa).

Zn(2+) contacts are provided by histidine 550, histidine 554, cysteine 652, and histidine 656.

It belongs to the class-II aminoacyl-tRNA synthetase family. Requires Zn(2+) as cofactor.

It is found in the cytoplasm. It catalyses the reaction tRNA(Ala) + L-alanine + ATP = L-alanyl-tRNA(Ala) + AMP + diphosphate. Functionally, catalyzes the attachment of alanine to tRNA(Ala) in a two-step reaction: alanine is first activated by ATP to form Ala-AMP and then transferred to the acceptor end of tRNA(Ala). Also edits incorrectly charged Ser-tRNA(Ala) and Gly-tRNA(Ala) via its editing domain. This is Alanine--tRNA ligase from Pseudothermotoga lettingae (strain ATCC BAA-301 / DSM 14385 / NBRC 107922 / TMO) (Thermotoga lettingae).